The primary structure comprises 118 residues: NADH-quinone oxidoreductase subunit A (118 aa).

3 consecutive transmembrane segments (helical) span residues 6-26 (LPVLIFLLVALVVGVAPLLMG), 64-84 (AILFILFDLEIAFLFPWAVVF), and 87-107 (IGMTGFLAMMLFLAILVVGFI).

It belongs to the complex I subunit 3 family. In terms of assembly, NDH-1 is composed of 14 different subunits. Subunits NuoA, H, J, K, L, M, N constitute the membrane sector of the complex.

Its subcellular location is the cell inner membrane. The enzyme catalyses a quinone + NADH + 5 H(+)(in) = a quinol + NAD(+) + 4 H(+)(out). In terms of biological role, NDH-1 shuttles electrons from NADH, via FMN and iron-sulfur (Fe-S) centers, to quinones in the respiratory chain. The immediate electron acceptor for the enzyme in this species is believed to be ubiquinone. Couples the redox reaction to proton translocation (for every two electrons transferred, four hydrogen ions are translocated across the cytoplasmic membrane), and thus conserves the redox energy in a proton gradient. The chain is NADH-quinone oxidoreductase subunit A from Acidithiobacillus ferrooxidans (strain ATCC 53993 / BNL-5-31) (Leptospirillum ferrooxidans (ATCC 53993)).